The primary structure comprises 512 residues: Glucose-1-phosphate adenylyltransferase small subunit 2, chloroplastic (512 aa).

The segment at M1–S21 is disordered. The transit peptide at M1–A63 directs the protein to the chloroplast. Residues S12–S21 show a composition bias toward low complexity.

The protein belongs to the bacterial/plant glucose-1-phosphate adenylyltransferase family. As to quaternary structure, heterotetramer. As to expression, leaves and seeds.

The protein resides in the plastid. It localises to the chloroplast. It catalyses the reaction alpha-D-glucose 1-phosphate + ATP + H(+) = ADP-alpha-D-glucose + diphosphate. It functions in the pathway glycan biosynthesis; starch biosynthesis. Its activity is regulated as follows. Activated by 3'phosphoglycerate, inhibited by orthophosphate. Allosteric regulation. In terms of biological role, this protein plays a role in synthesis of starch. It catalyzes the synthesis of the activated glycosyl donor, ADP-glucose from Glc-1-P and ATP. This Vicia faba (Broad bean) protein is Glucose-1-phosphate adenylyltransferase small subunit 2, chloroplastic (AGPP).